Reading from the N-terminus, the 183-residue chain is Thioredoxin-like protein CITRX, chloroplastic (183 aa).

The transit peptide at 1–81 (MALVQSRTFP…REDYLVKKLS (81 aa)) directs the protein to the chloroplast. The region spanning 82-183 (AQELQELVKG…MMHDIIDNEM (102 aa)) is the Thioredoxin domain. Active-site nucleophile residues include cysteine 106 and cysteine 109. Cysteines 106 and 109 form a disulfide.

It belongs to the thioredoxin family. Plant CITRX-type subfamily. In terms of assembly, interacts with FLN1 and FLN2. Interacts with MRL7.

The protein resides in the plastid. It is found in the chloroplast. Its function is as follows. Thiol-disulfide oxidoreductase that plays a role in proper chloroplast development, most likely through regulating plastid-encoded polymerase (PEP) dependent chloroplast transcription. Acts as a component of the transcriptionally active plastid chromosome that is required for plastid gene expression. The sequence is that of Thioredoxin-like protein CITRX, chloroplastic from Arabidopsis thaliana (Mouse-ear cress).